The primary structure comprises 358 residues: Histidinol-phosphate aminotransferase (358 aa).

Position 221 is an N6-(pyridoxal phosphate)lysine (Lys221).

The protein belongs to the class-II pyridoxal-phosphate-dependent aminotransferase family. Histidinol-phosphate aminotransferase subfamily. In terms of assembly, homodimer. Requires pyridoxal 5'-phosphate as cofactor.

The enzyme catalyses L-histidinol phosphate + 2-oxoglutarate = 3-(imidazol-4-yl)-2-oxopropyl phosphate + L-glutamate. It functions in the pathway amino-acid biosynthesis; L-histidine biosynthesis; L-histidine from 5-phospho-alpha-D-ribose 1-diphosphate: step 7/9. The sequence is that of Histidinol-phosphate aminotransferase from Caldicellulosiruptor saccharolyticus (strain ATCC 43494 / DSM 8903 / Tp8T 6331).